The following is a 344-amino-acid chain: Centromere protein L (344 aa).

Residues 1-32 are disordered; sequence MAGGRPAGSAIEMEGAMRTLPSSGRPSGTGWQ. Over residues 20 to 32 the composition is skewed to polar residues; that stretch reads LPSSGRPSGTGWQ.

Belongs to the CENP-L/IML3 family. Component of the CENPA-HI complex, at least composed of CENPH, CENPI, CENPK, CENPL, CENPM, CENPO and CENPP.

It is found in the nucleus. It localises to the chromosome. The protein localises to the centromere. Functionally, component of the CENPA-HI complex, a centromeric complex involved in assembly of kinetochore proteins, mitotic progression and chromosome segregation. The sequence is that of Centromere protein L (CENPL) from Gallus gallus (Chicken).